Consider the following 233-residue polypeptide: B-cell lymphoma/leukemia 10 (233 aa).

M1 bears the N-acetylmethionine mark. A CARD domain is found at 13-101; the sequence is LTEVKKDALE…QNFLIQKITD (89 aa). Glycyl lysine isopeptide (Lys-Gly) (interchain with G-Cter in ubiquitin) cross-links involve residues K17, K31, and K63. Positions 130–141 are enriched in polar residues; that stretch reads TNNLSRSNSDES. Disordered stretches follow at residues 130 to 149 and 186 to 233; these read TNNLSRSNSDESNFSEKQRP and SFSS…LSRQ. S138 carries the phosphoserine modification. The segment covering 195 to 205 has biased composition (pro residues); the sequence is PGDPGAPPLPP.

In terms of assembly, homomultimer; homooligomerized following recruitment by CARD domain-containing proteins that form a nucleating helical template that recruits BCL10 via CARD-CARD interaction. Self-associates by CARD-CARD interaction and interacts with other CARD-proteins such as CARD9, CARD10, CARD11 and CARD14. Forms a complex with CARD14 and MALT1; resulting in the formation of a CBM (CARD14-BCL10-MALT1) complex. Forms a complex with CARD11 and MALT1; resulting in the formation of a CBM (CARD11-BCL10-MALT1) complex. Forms a complex with CARD9 and MALT1; resulting in the formation of a CBM (CARD9-BCL10-MALT1) complex. Found in a membrane raft complex, at least composed of BCL10, CARD11, DPP4 and IKBKB. Binds caspase-9 with its C-terminal domain. Interacts with TRAF2 and BIRC2/c-IAP2. Interacts with PELI2 and SOCS3; these interactions may be mutually exclusive. In terms of processing, phosphorylated. Phosphorylation results in dissociation from TRAF2 and binding to BIRC2/c-IAP2. Phosphorylated by IKBKB/IKKB. Post-translationally, ubiquitinated via both 'Lys-63'-linked and linear ('Met-1'-linked) polyubiquitin chains in response to T-cell receptor (TCR) activation. Ubiquitination is recognized by IKBKG/NEMO, the regulatory subunit of I-kappa-B kinase (IKK), and is required for TCR-induced NF-kappa-B activation. Linear ubiquitination at Lys-17, Lys-31 and Lys-63 is mediated by RNF31/HOIP; linear ubiquitination is recognized with much higher affinity than 'Lys-63'-linked ubiquitin by IKBKG/NEMO. CARD11 is required for linear ubiquitination by HOIP by promoting the targeting of BCL10 to RNF31/HOIP. Proteolytically cleaved by MALT1; required for T-cell activation.

Its subcellular location is the cytoplasm. The protein resides in the perinuclear region. It is found in the membrane raft. Functionally, plays a key role in both adaptive and innate immune signaling by bridging CARD domain-containing proteins to immune activation. Acts by channeling adaptive and innate immune signaling downstream of CARD domain-containing proteins CARD9, CARD11 and CARD14 to activate NF-kappa-B and MAP kinase p38 (MAPK11, MAPK12, MAPK13 and/or MAPK14) pathways which stimulate expression of genes encoding pro-inflammatory cytokines and chemokines. Recruited by activated CARD domain-containing proteins: homooligomerized CARD domain-containing proteins form a nucleating helical template that recruits BCL10 via CARD-CARD interaction, thereby promoting polymerization of BCL10, subsequent recruitment of MALT1 and formation of a CBM complex. This leads to activation of NF-kappa-B and MAP kinase p38 (MAPK11, MAPK12, MAPK13 and/or MAPK14) pathways which stimulate expression of genes encoding pro-inflammatory cytokines and chemokines. Activated by CARD9 downstream of C-type lectin receptors; CARD9-mediated signals are essential for antifungal immunity. Activated by CARD11 downstream of T-cell receptor (TCR) and B-cell receptor (BCR). Promotes apoptosis, pro-caspase-9 maturation and activation of NF-kappa-B via NIK and IKK. The protein is B-cell lymphoma/leukemia 10 of Rattus norvegicus (Rat).